We begin with the raw amino-acid sequence, 229 residues long: 2-C-methyl-D-erythritol 4-phosphate cytidylyltransferase (229 aa).

This sequence belongs to the IspD/TarI cytidylyltransferase family. IspD subfamily.

It carries out the reaction 2-C-methyl-D-erythritol 4-phosphate + CTP + H(+) = 4-CDP-2-C-methyl-D-erythritol + diphosphate. It functions in the pathway isoprenoid biosynthesis; isopentenyl diphosphate biosynthesis via DXP pathway; isopentenyl diphosphate from 1-deoxy-D-xylulose 5-phosphate: step 2/6. Functionally, catalyzes the formation of 4-diphosphocytidyl-2-C-methyl-D-erythritol from CTP and 2-C-methyl-D-erythritol 4-phosphate (MEP). This chain is 2-C-methyl-D-erythritol 4-phosphate cytidylyltransferase, found in Clostridium botulinum (strain Okra / Type B1).